The chain runs to 225 residues: LHFPL tetraspan subfamily member 2a protein (225 aa).

4 consecutive transmembrane segments (helical) span residues 11 to 31 (MLWT…FLST), 99 to 119 (IFLA…IFTM), 129 to 149 (IFNV…VGLV), and 178 to 198 (AGWA…CAVF).

This sequence belongs to the LHFP family.

The protein resides in the membrane. Its function is as follows. Plays a role in fertility. Involved in distal reproductive tract development. The chain is LHFPL tetraspan subfamily member 2a protein from Danio rerio (Zebrafish).